Consider the following 329-residue polypeptide: METLFSGIQPSGIPTIGNYIGALKQFVDVQNDYDCYFCIVDQHAITMPQDRLKLRKQTRQLAAIYLASGIDPDKATLFIQSEVPAHVQAGWMLTTIASVGELERMTQYKDKAQKAVEGIPAGLLTYPPLMAADIVLYNTNIVPVGDDQKQHIELTRNLVDRFNSRYNDVLVKPEIRMPKVGGRVMSLQDPTRKMSKSDDNAKNFISLLDEPNVAAKKIKSAVTDSDGIIKFDRDNKPGITNLISIYAGLTDMPIKDIEAKYEGEGYGKFKGDLAEIVKAFLVEFQEKYESFYNSDKLDDILDQGRDKAHKASFKTVKKMEKAMGLGRKR.

Residues Gln-9 to Ser-11 and Gly-17 to Asn-18 contribute to the ATP site. The 'HIGH' region motif lies at Pro-10–Asn-18. Asp-133 contacts L-tryptophan. ATP is bound by residues Gly-145–Asp-147, Val-184, and Lys-193–Ser-197. A 'KMSKS' region motif is present at residues Lys-193 to Ser-197.

The protein belongs to the class-I aminoacyl-tRNA synthetase family. In terms of assembly, homodimer.

The protein resides in the cytoplasm. It catalyses the reaction tRNA(Trp) + L-tryptophan + ATP = L-tryptophyl-tRNA(Trp) + AMP + diphosphate + H(+). Functionally, catalyzes the attachment of tryptophan to tRNA(Trp). This chain is Tryptophan--tRNA ligase, found in Staphylococcus aureus (strain MRSA252).